A 357-amino-acid polypeptide reads, in one-letter code: Probable leucine aminopeptidase MCYG_04170 (357 aa).

Positions 1–15 (MKVLAALALSALALA) are cleaved as a signal peptide. An N-linked (GlcNAc...) asparagine glycan is attached at Asn76. Zn(2+) contacts are provided by His167 and Asp185. Asn186 carries an N-linked (GlcNAc...) asparagine glycan. The Zn(2+) site is built by Glu224 and Asp251. Cys291 and Cys295 are disulfide-bonded. Zn(2+) is bound at residue His324.

This sequence belongs to the peptidase M28 family. M28E subfamily. In terms of assembly, monomer. Zn(2+) serves as cofactor.

It localises to the secreted. In terms of biological role, probable extracellular aminopeptidase which contributes to pathogenicity. This is Probable leucine aminopeptidase MCYG_04170 from Arthroderma otae (strain ATCC MYA-4605 / CBS 113480) (Microsporum canis).